The following is a 624-amino-acid chain: Bifunctional 3'-phosphoadenosine 5'-phosphosulfate synthase 1 (624 aa).

Position 1 is an N-acetylmethionine (Met1). The segment at 1 to 225 is adenylyl-sulfate kinase; that stretch reads MEIPGSLCKK…VVELLQERDI (225 aa). Lys12 carries the N6-acetyllysine modification. Position 62-67 (62-67) interacts with ATP; the sequence is GAGKTT. Residues 89 to 92, Phe101, 106 to 109, 132 to 133, Lys171, and 184 to 185 each bind adenosine 5'-phosphosulfate; these read DNIR, REEN, IS, and GF. ATP contacts are provided by residues Cys207, Cys212, 419–422, 521–525, and Ala563; these read QLRN and GRDPA. A sulfate adenylyltransferase region spans residues 234-624; sequence VKELYVPENK…TEYYKSLEKA (391 aa).

It in the N-terminal section; belongs to the APS kinase family. This sequence in the C-terminal section; belongs to the sulfate adenylyltransferase family. Homodimer. In terms of tissue distribution, expressed in testis, pancreas, kidney, thymus, prostate, ovary, small intestine, colon, leukocytes and liver. Also expressed in high endothelial venules (HEV) cells and in cartilage.

It catalyses the reaction sulfate + ATP + H(+) = adenosine 5'-phosphosulfate + diphosphate. The enzyme catalyses adenosine 5'-phosphosulfate + ATP = 3'-phosphoadenylyl sulfate + ADP + H(+). It participates in sulfur metabolism; sulfate assimilation. With respect to regulation, inhibited by chlorate. The kinase activity is subject to inhibition by the substrate adenylyl sulfate. Bifunctional enzyme with both ATP sulfurylase and APS kinase activity, which mediates two steps in the sulfate activation pathway. The first step is the transfer of a sulfate group to ATP to yield adenosine 5'-phosphosulfate (APS), and the second step is the transfer of a phosphate group from ATP to APS yielding 3'-phosphoadenylylsulfate (PAPS: activated sulfate donor used by sulfotransferase). In mammals, PAPS is the sole source of sulfate; APS appears to be only an intermediate in the sulfate-activation pathway. Required for normal biosynthesis of sulfated L-selectin ligands in endothelial cells. This Homo sapiens (Human) protein is Bifunctional 3'-phosphoadenosine 5'-phosphosulfate synthase 1 (PAPSS1).